A 186-amino-acid polypeptide reads, in one-letter code: Large ribosomal subunit protein uL22 (186 aa).

2 stretches are compositionally biased toward basic and acidic residues: residues 157–167 and 177–186; these read VSKATDDEPTK and RQKEKMLRSE. The interval 157 to 186 is disordered; sequence VSKATDDEPTKKKLSKKKLQRQKEKMLRSE.

It belongs to the universal ribosomal protein uL22 family.

The protein is Large ribosomal subunit protein uL22 (RpL17) of Drosophila yakuba (Fruit fly).